A 46-amino-acid polypeptide reads, in one-letter code: MNFGIKPDVSSGPRKGGPFKELSDFSKTSPTPQQPRSLSGKSVMLP.

Residues 1-46 (MNFGIKPDVSSGPRKGGPFKELSDFSKTSPTPQQPRSLSGKSVMLP) are disordered. Polar residues predominate over residues 25 to 40 (FSKTSPTPQQPRSLSG).

This is an uncharacterized protein from Dictyostelium discoideum (Social amoeba).